A 1436-amino-acid chain; its full sequence is Non-structural polyprotein 1AB (1436 aa).

Residues 104–142 (KLIHKANALQERLRLSQEEKATLALDVQFLQHENVRLKE) are a coiled coil. Transmembrane regions (helical) follow at residues 156 to 176 (WIIM…YAHS), 239 to 259 (VFYY…LAIG), 286 to 306 (VLPT…TLMV), 313 to 333 (LLAI…LCFM), and 344 to 364 (GLIA…LTGT). Residues His461, Asp489, and Ser551 each act as charge relay system; for serine protease activity in the active site. Positions 587–620 (VKAPSQVELLKEEIERLKAQLNSATENATTVVTQ) form a coiled coil. An O-(5'-phospho-RNA)-tyrosine modification is found at Tyr693. Disordered stretches follow at residues 756–828 (AKPI…YSQT) and 913–934 (SKNK…EDQG). The RdRp catalytic domain maps to 1181-1307 (KHFIEFDWTR…TTPSVPDDYE (127 aa)).

The protein belongs to the astroviridae polyprotein 1AB family. In terms of assembly, monomer. In terms of processing, cleaved by the viral and host proteases. The protease is probably autocatalytically cleaved.

It localises to the host membrane. The catalysed reaction is RNA(n) + a ribonucleoside 5'-triphosphate = RNA(n+1) + diphosphate. Responsible for the cleavage of the polyprotein into functional products. In terms of biological role, protein covalently attached to the 5' extremity of the genomic and subgenomic RNAs. It may serve as a primer for the replicase. This Homo sapiens (Human) protein is Non-structural polyprotein 1AB (ORF1).